The following is a 459-amino-acid chain: Hypotaurine/taurine--pyruvate aminotransferase (459 aa).

Lys287 carries the post-translational modification N6-(pyridoxal phosphate)lysine.

The protein belongs to the class-III pyridoxal-phosphate-dependent aminotransferase family. It depends on pyridoxal 5'-phosphate as a cofactor.

It catalyses the reaction hypotaurine + pyruvate = 2-sulfinoacetaldehyde + L-alanine. It carries out the reaction taurine + pyruvate = sulfoacetaldehyde + L-alanine. The protein operates within organosulfur degradation. Converts hypotaurine to alanine and sulfinoacetaldehyde, which desulfinates spontaneously to acetaldehyde and sulfite. Can also catalyze the degradation of taurine into alanine and sulfoacetaldehyde, which is stable. Has 2-fold higher aminotransferase activity with hypotaurine as the substrate. The chain is Hypotaurine/taurine--pyruvate aminotransferase from Paracoccus denitrificans (strain Pd 1222).